A 225-amino-acid polypeptide reads, in one-letter code: Imidazoleglycerol-phosphate dehydratase (225 aa).

It belongs to the imidazoleglycerol-phosphate dehydratase family.

It carries out the reaction D-erythro-1-(imidazol-4-yl)glycerol 3-phosphate = 3-(imidazol-4-yl)-2-oxopropyl phosphate + H2O. The protein operates within amino-acid biosynthesis; L-histidine biosynthesis; L-histidine from 5-phospho-alpha-D-ribose 1-diphosphate: step 6/9. The chain is Imidazoleglycerol-phosphate dehydratase (PTH3) from Pyricularia oryzae (strain 70-15 / ATCC MYA-4617 / FGSC 8958) (Rice blast fungus).